The chain runs to 252 residues: Chitooligosaccharide deacetylase (252 aa).

Mg(2+) is bound by residues H61 and H125.

This sequence belongs to the YdjC deacetylase family. ChbG subfamily. In terms of assembly, homodimer. Requires Mg(2+) as cofactor.

Its subcellular location is the cytoplasm. It carries out the reaction N,N'-diacetylchitobiose + H2O = N-acetyl-beta-D-glucosaminyl-(1-&gt;4)-D-glucosamine + acetate. It catalyses the reaction diacetylchitobiose-6'-phosphate + H2O = N'-monoacetylchitobiose-6'-phosphate + acetate. It participates in glycan degradation; chitin degradation. Functionally, involved in the degradation of chitin. ChbG is essential for growth on the acetylated chitooligosaccharides chitobiose and chitotriose but is dispensable for growth on cellobiose and chitosan dimer, the deacetylated form of chitobiose. Deacetylation of chitobiose-6-P and chitotriose-6-P is necessary for both the activation of the chb promoter by the regulatory protein ChbR and the hydrolysis of phosphorylated beta-glucosides by the phospho-beta-glucosidase ChbF. Catalyzes the removal of only one acetyl group from chitobiose-6-P to yield monoacetylchitobiose-6-P, the inducer of ChbR and the substrate of ChbF. This Salmonella schwarzengrund (strain CVM19633) protein is Chitooligosaccharide deacetylase.